The chain runs to 519 residues: Cytochrome P450 52E2 (519 aa).

Helical transmembrane passes span 10–30 and 44–64; these read MLGGISLSFLLASQAIYFYFI and PIFFSFPLGIPDLIRLVNAWF. Cysteine 461 is a binding site for heme.

The protein belongs to the cytochrome P450 family. Heme is required as a cofactor.

Its subcellular location is the membrane. Together with an NADPH cytochrome P450 the enzyme system catalyzes the terminal hydroxylation as the first step in the assimilation of alkanes and fatty acids. The protein is Cytochrome P450 52E2 (CYP52E2) of Candida apicola (Yeast).